A 146-amino-acid chain; its full sequence is Multiple coagulation factor deficiency protein 2 (146 aa).

The first 26 residues, 1 to 26, serve as a signal peptide directing secretion; it reads MTMRSLLRTPFLCGLLWAFCAPGARA. In terms of domain architecture, EF-hand 1 spans 68-103; sequence SPQELQLHYFKMHDYDGNNLLDGLELSTAITHVHKE. The Ca(2+) site is built by Asp-81, Asp-83, Asn-85, and Glu-92. Ser-106 is modified (phosphoserine). The EF-hand 2 domain occupies 116–146; the sequence is ELINIIDGVLRDDDKNNDGYIDYAEFAKSLQ. The Ca(2+) site is built by Asp-129, Asn-131, Asp-133, Tyr-135, and Glu-140.

In terms of assembly, interacts in a calcium-dependent manner with LMAN1.

The protein resides in the endoplasmic reticulum-Golgi intermediate compartment. It localises to the endoplasmic reticulum. It is found in the golgi apparatus. Its function is as follows. The MCFD2-LMAN1 complex forms a specific cargo receptor for the ER-to-Golgi transport of selected proteins. Plays a role in the secretion of coagulation factors. This chain is Multiple coagulation factor deficiency protein 2 (MCFD2), found in Homo sapiens (Human).